A 70-amino-acid chain; its full sequence is U-actitoxin-Ael2c (70 aa).

An N-terminal signal peptide occupies residues 1–21; it reads SYQRFLFLVVVASLIATSLAI. Residues 22-26 constitute a propeptide that is removed on maturation; it reads PKDLE. Disulfide bonds link C32/C65, C34/C58, and C48/C66.

This sequence belongs to the sea anemone type 3 (BDS) potassium channel toxin family.

It localises to the secreted. Its subcellular location is the nematocyst. Potently and selectively inhibits voltage-gated potassium channels Kv11/KCNH/ERG. Acts as a gating-modifier toxin that shifts the voltage-dependence of ERG activation in the positive direction and suppresses its current amplitudes elicited by strong depolarizing pulses that maximally activate the channels. The polypeptide is U-actitoxin-Ael2c (Anthopleura elegantissima (Green aggregating anemone)).